The sequence spans 206 residues: Small ribosomal subunit protein uS4 (206 aa).

In terms of domain architecture, S4 RNA-binding spans 96–157 (QRLDNVVYRM…KAKKQARIGA (62 aa)).

It belongs to the universal ribosomal protein uS4 family. As to quaternary structure, part of the 30S ribosomal subunit. Contacts protein S5. The interaction surface between S4 and S5 is involved in control of translational fidelity.

Functionally, one of the primary rRNA binding proteins, it binds directly to 16S rRNA where it nucleates assembly of the body of the 30S subunit. Its function is as follows. With S5 and S12 plays an important role in translational accuracy. This is Small ribosomal subunit protein uS4 from Idiomarina loihiensis (strain ATCC BAA-735 / DSM 15497 / L2-TR).